The sequence spans 70 residues: Large ribosomal subunit protein uL29 (70 aa).

The protein belongs to the universal ribosomal protein uL29 family.

In Clostridium botulinum (strain Alaska E43 / Type E3), this protein is Large ribosomal subunit protein uL29.